Here is a 333-residue protein sequence, read N- to C-terminus: MSAALKRYDLDKLAVATVASHTALQILRGAKRYGFRTIAVAQRNADFYRQFSFIDEVWTADFSNFRHVAEKLVEKNALFIPHGSYVEYVGWRQALEAPVPTLGCRELLRWEADQYKKMELLAAAGIPTPRYYKRAEEAEGPVIVKLFGAKGGRGYFVAKNREELAKRIKAVEGDYIIQEYVFGVPAYYHYFASPVYNRVEIFGMDIRYETNVDGRTFGWVEPTFVVVGNLPLVLRESLLPVVHKYGVDFAKAVREKVSCELAGPYCLESIIRDDMTIVVFEFSGRIVAGTNVYMGVGSPYSVLYFDEPMDMGERIAHEIKEAAARGILEKLFT.

5-amino-1-(5-phospho-beta-D-ribosyl)imidazole-4-carboxamide-binding residues include H21 and S84. One can recognise an ATP-grasp domain in the interval 118 to 313 (MELLAAAGIP…YFDEPMDMGE (196 aa)). ATP-binding positions include 141 to 187 (PVIV…VPAY) and E209. N229 provides a ligand contact to 5-amino-1-(5-phospho-beta-D-ribosyl)imidazole-4-carboxamide. The Mg(2+) site is built by E268 and E281.

It belongs to the phosphohexose mutase family. Requires Mg(2+) as cofactor. The cofactor is Mn(2+).

The enzyme catalyses 5-amino-1-(5-phospho-beta-D-ribosyl)imidazole-4-carboxamide + formate + ATP = 5-formamido-1-(5-phospho-D-ribosyl)imidazole-4-carboxamide + ADP + phosphate. It functions in the pathway purine metabolism; IMP biosynthesis via de novo pathway; 5-formamido-1-(5-phospho-D-ribosyl)imidazole-4-carboxamide from 5-amino-1-(5-phospho-D-ribosyl)imidazole-4-carboxamide (formate route): step 1/1. Catalyzes the ATP- and formate-dependent formylation of 5-aminoimidazole-4-carboxamide-1-beta-d-ribofuranosyl 5'-monophosphate (AICAR) to 5-formaminoimidazole-4-carboxamide-1-beta-d-ribofuranosyl 5'-monophosphate (FAICAR) in the absence of folates. The protein is 5-formaminoimidazole-4-carboxamide-1-(beta)-D-ribofuranosyl 5'-monophosphate synthetase of Pyrobaculum calidifontis (strain DSM 21063 / JCM 11548 / VA1).